The primary structure comprises 100 residues: Testis development-related protein 1 (100 aa).

The tract at residues 73 to 100 (GLGSLGGQDSSGSLVQRASCELESPYEL) is disordered.

Expressed in the testis but not in any other non-reproductive tissues (at protein level). Mainly located in spermatogenic cells in seminiferous tubules of adult testis.

The protein resides in the cytoplasm. In Homo sapiens (Human), this protein is Testis development-related protein 1 (TDRG1).